A 272-amino-acid polypeptide reads, in one-letter code: MKLVKPKKFLGQHFLKDLKVAQDIADTVDTFPDLPILEVGPGMGVLTQFLVKKERLVKVVEVDYESVAYLREAYPSLEDNIIEDDFLKMNLQRLFDGHPFVLTGNYPYNISSQIFFKMLDNKDLIPCCTGMIQKEVAERIAAGPGSKTYGILSVLIQAWYRVEYLFTVNEQVFNPPPKVKSAVIRMTRNETQELGCDPKLFKQIVKTTFNQRRKTLRNSIKPILGKDCPLTEDALFNKRPEQLSVQEFIHLTNQVEQALKVPIEPVSQIENP.

S-adenosyl-L-methionine is bound by residues H13, L15, G40, E61, D85, and N105.

This sequence belongs to the class I-like SAM-binding methyltransferase superfamily. rRNA adenine N(6)-methyltransferase family. RsmA subfamily.

The protein resides in the cytoplasm. The enzyme catalyses adenosine(1518)/adenosine(1519) in 16S rRNA + 4 S-adenosyl-L-methionine = N(6)-dimethyladenosine(1518)/N(6)-dimethyladenosine(1519) in 16S rRNA + 4 S-adenosyl-L-homocysteine + 4 H(+). In terms of biological role, specifically dimethylates two adjacent adenosines (A1518 and A1519) in the loop of a conserved hairpin near the 3'-end of 16S rRNA in the 30S particle. May play a critical role in biogenesis of 30S subunits. The polypeptide is Ribosomal RNA small subunit methyltransferase A (Bacteroides fragilis (strain ATCC 25285 / DSM 2151 / CCUG 4856 / JCM 11019 / LMG 10263 / NCTC 9343 / Onslow / VPI 2553 / EN-2)).